The sequence spans 1339 residues: DNA polymerase alpha catalytic subunit (1339 aa).

Disordered regions lie at residues 1-29 (MEDWVSCRSEEQKRCEEKGQSTFDESEEE) and 60-89 (AKRRKPRKSGKVIATQKCAQPQNQHRHQQK). Residues 8-19 (RSEEQKRCEEKG) are compositionally biased toward basic and acidic residues. Residues Cys1179, Cys1182, Cys1215, Cys1218, Cys1235, Cys1244, Cys1274, and Cys1289 each coordinate Zn(2+). The CysA-type zinc-finger motif lies at 1179 to 1218 (CTHCQLVVPVDPHKYINDMFSSREKPPPTAPFELYVCFNC). The short motif at 1244–1274 (CSGGNVASVRALRAQFTYLRAMFDVPQALNC) is the CysB motif element.

Belongs to the DNA polymerase type-B family.

Its subcellular location is the nucleus. The enzyme catalyses DNA(n) + a 2'-deoxyribonucleoside 5'-triphosphate = DNA(n+1) + diphosphate. In terms of biological role, polymerase alpha in a complex with DNA primase is a replicative polymerase. The polypeptide is DNA polymerase alpha catalytic subunit (Trypanosoma brucei brucei).